Reading from the N-terminus, the 285-residue chain is Cytochrome P450 monooxygenase eupD (285 aa).

A signal peptide spans 1-19; sequence MSIAGLVTTLPWLMNMLRA. Cys-229 lines the heme pocket.

It belongs to the cytochrome P450 family. Heme serves as cofactor.

It participates in secondary metabolite biosynthesis; terpenoid biosynthesis. Its function is as follows. Cytochrome P450 monooxygenase; part of the gene cluster that mediates the biosynthesis of eupenifeldin, a bistropolone meroterpenoid that acts as an antitumor agent. The first step of eupenifeldin biosynthesis is the biosynthesis of 3-methylorcinaldehyde performed by the non-reducing polyketide synthase eupA. Oxidative dearomatization of 3-methylorcinaldehyde likely catalyzed by the FAD-dependent monooxygenase eupB is followed by oxidative ring expansion by the 2-oxoglutarate-dependent dioxygenase eupC to provide the first tropolone metabolite, tropolone stipitaldehyde. In parallel, generation of sesquiterpene alpha-humulene from farnesylpyrophosphate (FPP) is catalyzed by the terpene cyclase eupE. The cytochrome P450 monooxygenase eupD then hydroxylates humulene to humulenol. The putative Diels-Alderase eupF probably catalyzes the formation of the tropolone-humulene skeleton by linking humulenol and the polyketide moiety. The short-chain dehydrogenase/reductase eupG and the flavin-dependent monooxygenase eupH are also essential for eupenifeldin biosynthesis and are likely the additional decorating enzymes of the tropolone-humulene skeleton to produce final eupenifeldin or derivatives. This Phoma sp protein is Cytochrome P450 monooxygenase eupD.